We begin with the raw amino-acid sequence, 250 residues long: Ditrans,polycis-undecaprenyl-diphosphate synthase ((2E,6E)-farnesyl-diphosphate specific) (250 aa).

Residue D20 is part of the active site. D20 serves as a coordination point for Mg(2+). Substrate contacts are provided by residues 21–24, W25, R33, H37, and 65–67; these read GNGR and SSE. N68 acts as the Proton acceptor in catalysis. Residues W69, R71, R188, and 194–196 each bind substrate; that span reads RIS. E207 contributes to the Mg(2+) binding site.

The protein belongs to the UPP synthase family. In terms of assembly, homodimer. Mg(2+) serves as cofactor.

The enzyme catalyses 8 isopentenyl diphosphate + (2E,6E)-farnesyl diphosphate = di-trans,octa-cis-undecaprenyl diphosphate + 8 diphosphate. Catalyzes the sequential condensation of isopentenyl diphosphate (IPP) with (2E,6E)-farnesyl diphosphate (E,E-FPP) to yield (2Z,6Z,10Z,14Z,18Z,22Z,26Z,30Z,34E,38E)-undecaprenyl diphosphate (di-trans,octa-cis-UPP). UPP is the precursor of glycosyl carrier lipid in the biosynthesis of bacterial cell wall polysaccharide components such as peptidoglycan and lipopolysaccharide. This Vibrio cholerae serotype O1 (strain ATCC 39315 / El Tor Inaba N16961) protein is Ditrans,polycis-undecaprenyl-diphosphate synthase ((2E,6E)-farnesyl-diphosphate specific).